The sequence spans 273 residues: 4-hydroxy-tetrahydrodipicolinate reductase (273 aa).

NAD(+) is bound by residues 12-17 (GAGGRM) and E38. R39 provides a ligand contact to NADP(+). NAD(+) contacts are provided by residues 102–104 (GTT) and 126–129 (AANF). H159 functions as the Proton donor/acceptor in the catalytic mechanism. H160 provides a ligand contact to (S)-2,3,4,5-tetrahydrodipicolinate. K163 acts as the Proton donor in catalysis. 169 to 170 (GT) contributes to the (S)-2,3,4,5-tetrahydrodipicolinate binding site.

Belongs to the DapB family. Homotetramer.

It is found in the cytoplasm. The enzyme catalyses (S)-2,3,4,5-tetrahydrodipicolinate + NAD(+) + H2O = (2S,4S)-4-hydroxy-2,3,4,5-tetrahydrodipicolinate + NADH + H(+). The catalysed reaction is (S)-2,3,4,5-tetrahydrodipicolinate + NADP(+) + H2O = (2S,4S)-4-hydroxy-2,3,4,5-tetrahydrodipicolinate + NADPH + H(+). Its pathway is amino-acid biosynthesis; L-lysine biosynthesis via DAP pathway; (S)-tetrahydrodipicolinate from L-aspartate: step 4/4. Catalyzes the conversion of 4-hydroxy-tetrahydrodipicolinate (HTPA) to tetrahydrodipicolinate. The polypeptide is 4-hydroxy-tetrahydrodipicolinate reductase (Enterobacter sp. (strain 638)).